We begin with the raw amino-acid sequence, 275 residues long: Large ribosomal subunit protein uL2 (275 aa).

The tract at residues 227–261 (PVDHPHGGGEAKSGQGNPHPVTPWGVPTKGYKTRK) is disordered.

This sequence belongs to the universal ribosomal protein uL2 family. As to quaternary structure, part of the 50S ribosomal subunit. Forms a bridge to the 30S subunit in the 70S ribosome.

Its function is as follows. One of the primary rRNA binding proteins. Required for association of the 30S and 50S subunits to form the 70S ribosome, for tRNA binding and peptide bond formation. It has been suggested to have peptidyltransferase activity; this is somewhat controversial. Makes several contacts with the 16S rRNA in the 70S ribosome. This chain is Large ribosomal subunit protein uL2, found in Xylella fastidiosa (strain M23).